The following is a 404-amino-acid chain: D-galactonate dehydratase family member PC1_0802 (404 aa).

The substrate site is built by Asn37 and His122. Tyr159 functions as the Proton donor/acceptor in the catalytic mechanism. Position 212 (Asp212) interacts with Mg(2+). Catalysis depends on His214, which acts as the Proton donor/acceptor. Glu238 and Glu264 together coordinate Mg(2+). Glu264, Arg285, His314, Asp318, and Glu341 together coordinate substrate.

It belongs to the mandelate racemase/muconate lactonizing enzyme family. GalD subfamily. It depends on Mg(2+) as a cofactor.

It catalyses the reaction D-mannonate = 2-dehydro-3-deoxy-D-gluconate + H2O. Functionally, has low D-mannonate dehydratase activity (in vitro), suggesting that this is not a physiological substrate and that it has no significant role in D-mannonate degradation in vivo. Has no detectable activity with a panel of 70 other acid sugars (in vitro). In Pectobacterium carotovorum subsp. carotovorum (strain PC1), this protein is D-galactonate dehydratase family member PC1_0802.